Consider the following 491-residue polypeptide: Cobyric acid synthase (491 aa).

The GATase cobBQ-type domain maps to 250–437; it reads QLRVVVPVLP…VHGVFDHPQA (188 aa). The active-site Nucleophile is the cysteine 331. Histidine 429 is an active-site residue.

The protein belongs to the CobB/CobQ family. CobQ subfamily.

The protein operates within cofactor biosynthesis; adenosylcobalamin biosynthesis. Functionally, catalyzes amidations at positions B, D, E, and G on adenosylcobyrinic A,C-diamide. NH(2) groups are provided by glutamine, and one molecule of ATP is hydrogenolyzed for each amidation. The polypeptide is Cobyric acid synthase (Xanthomonas axonopodis pv. citri (strain 306)).